The chain runs to 284 residues: 4-diphosphocytidyl-2-C-methyl-D-erythritol kinase (284 aa).

K17 is an active-site residue. 100 to 110 (PMGGGLGGGSS) contacts ATP. D142 is an active-site residue.

Belongs to the GHMP kinase family. IspE subfamily.

It carries out the reaction 4-CDP-2-C-methyl-D-erythritol + ATP = 4-CDP-2-C-methyl-D-erythritol 2-phosphate + ADP + H(+). It functions in the pathway isoprenoid biosynthesis; isopentenyl diphosphate biosynthesis via DXP pathway; isopentenyl diphosphate from 1-deoxy-D-xylulose 5-phosphate: step 3/6. Catalyzes the phosphorylation of the position 2 hydroxy group of 4-diphosphocytidyl-2C-methyl-D-erythritol. In Aromatoleum aromaticum (strain DSM 19018 / LMG 30748 / EbN1) (Azoarcus sp. (strain EbN1)), this protein is 4-diphosphocytidyl-2-C-methyl-D-erythritol kinase.